The sequence spans 274 residues: N-acetylmuramic acid 6-phosphate etherase (274 aa).

Residues 52–215 (IVPRMEQGGR…STSIMIRLGR (164 aa)) enclose the SIS domain. E80 acts as the Proton donor in catalysis. Residue E111 is part of the active site.

It belongs to the GCKR-like family. MurNAc-6-P etherase subfamily. As to quaternary structure, homodimer.

The catalysed reaction is N-acetyl-D-muramate 6-phosphate + H2O = N-acetyl-D-glucosamine 6-phosphate + (R)-lactate. It participates in amino-sugar metabolism; N-acetylmuramate degradation. Specifically catalyzes the cleavage of the D-lactyl ether substituent of MurNAc 6-phosphate, producing GlcNAc 6-phosphate and D-lactate. The polypeptide is N-acetylmuramic acid 6-phosphate etherase (Porphyromonas gingivalis (strain ATCC 33277 / DSM 20709 / CIP 103683 / JCM 12257 / NCTC 11834 / 2561)).